Here is a 491-residue protein sequence, read N- to C-terminus: Immediate early protein IE1 (491 aa).

Over residues 1-11 (MESSAKRKMDP) the composition is skewed to basic and acidic residues. Positions 1–24 (MESSAKRKMDPDNPDEGPSSKVPR) are nuclear localization signal. Residues 1–30 (MESSAKRKMDPDNPDEGPSSKVPRPETPVT) form a disordered region. An interaction with host PML, interference with PML sumoylation and disruption of PML-associated nuclear bodies region spans residues 132–346 (ILDKVHEPFE…SVMKRRIEEI (215 aa)). Residues 373-445 (AIAEESDEEE…EEGAQEERED (73 aa)) are interaction with host STAT2. The segment at 410-420 (ATIPLSSVIVA) is modulation of STAT3/STAT1 signaling. Residues 410 to 445 (ATIPLSSVIVAENSDQEESEQSDEEEEEGAQEERED) are interaction with host STAT3. Positions 421–472 (ENSDQEESEQSDEEEEEGAQEEREDTVSVKSEPVSEIEEVAPEEEEDGAEEP) are acidic. The segment at 421–491 (ENSDQEESEQ…PMVTRSKADQ (71 aa)) is disordered. Positions 423 to 444 (SDQEESEQSDEEEEEGAQEERE) are enriched in acidic residues. Residues 449 to 452 (VKSE) are interaction with host SUMO1. A Glycyl lysine isopeptide (Lys-Gly) (interchain with G-Cter in SUMO) cross-link involves residue K450. Residues 455-470 (SEIEEVAPEEEEDGAE) are compositionally biased toward acidic residues. Positions 475–491 (SGGKSTHPMVTRSKADQ) are chromosome-tethering domain (CTD), binding to histones.

The protein belongs to the HHV-5 IE1 protein family. Forms homodimers. Interacts with human p53/TP53; this interaction inhibits p53/TP53-dependent transactivation activity. Interacts with host STAT1. Interacts with host STAT2; this interaction promotes viral growth and counteracts the antiviral interferon response. May also interact with the host STAT1-STAT2 heterodimer. Interacts with host STAT3; this interaction leads to STAT3 nuclear accumulation and disruption of IL6-induced STAT3 phosphorylation. Interacts with host PML; this interaction inhibits host PML de novo sumoylation and probably inhibits PML regulation of type I and type II interferon-induced gene expression. Interacts with host DAXX. Interacts with host SP100. Interacts with host E2F1. Interacts with host RB1. Interacts with host HDAC1; this interaction inhibits histone deacetylation and promotes viral transcription. Interacts with host HDAC2; this interaction inhibits histone deacetylation and promotes viral transcription. Interacts with host HDAC3; this interaction inhibits histone deacetylation and promotes viral transcription. Interacts with host PLSCR1; this interaction inhibits IE1 transactivating activity. Post-translationally, sumoylated by host PML/nuclear domain 10. Sumoylation abolishes the interaction with host STAT2 and thus the IE1-mediated repression of interferon-stimulated genes.

The protein localises to the host nucleus. Its function is as follows. Plays an important role in transactivating viral early genes as well as activating its own promoter, probably by altering the viral chromatin structure. Expression of IE1 and IE2 proteins is critical for the establishment of lytic infection and reactivation from viral latency. Disrupts PML-associated ND10 nuclear bodies by interfering with host PML and SP100 sumoylation thereby altering the regulation of type I and type II interferon-induced gene expression. Promotes efficient viral growth by interacting with and directing host SP100 to degradation, leading to enhanced acetylation level of histones. In addition, functions in counteracting the host innate antiviral response. Inhibits the type I interferon pathway by directly interacting with and sequestrating host STAT2. Also targets type II interferon pathway by repressing IL6- and STAT3 target genes. Repression of STAT3 genes is due to STAT3 nuclear accumulation and disruption of IL6-induced STAT3 phosphorylation by IE1. This repression is followed by phosphorylation and activation of STAT1. Inhibits host ISG transcription by sequestering host ISGF3 in a PML- and STAT2- binding dependent manner. Alters host cell cycle progression, probably through its interaction with host E2F1 or RB1 that overcomes the RB1-mediated repression of E2F-responsive promoters. May act as a E3 ubiquitin ligase targeting several host proteins including HES1 and SP100A for ubiquitination and subsequent proteasomal degradation. Impairs the radial migration of immature neurons by downregulating Gap junction alpha-1 protein/GJA1 also via ubiquitination and degradation. The polypeptide is Immediate early protein IE1 (UL123) (Human cytomegalovirus (strain Towne) (HHV-5)).